We begin with the raw amino-acid sequence, 210 residues long: Viral protein 1 (210 aa).

This is Viral protein 1 from Chaetoceros (Chaetoceros sp. DNA virus 7).